A 172-amino-acid chain; its full sequence is S-ribosylhomocysteine lyase (172 aa).

3 residues coordinate Fe cation: H54, H58, and C128.

The protein belongs to the LuxS family. As to quaternary structure, homodimer. Requires Fe cation as cofactor.

The enzyme catalyses S-(5-deoxy-D-ribos-5-yl)-L-homocysteine = (S)-4,5-dihydroxypentane-2,3-dione + L-homocysteine. Functionally, involved in the synthesis of autoinducer 2 (AI-2) which is secreted by bacteria and is used to communicate both the cell density and the metabolic potential of the environment. The regulation of gene expression in response to changes in cell density is called quorum sensing. Catalyzes the transformation of S-ribosylhomocysteine (RHC) to homocysteine (HC) and 4,5-dihydroxy-2,3-pentadione (DPD). The sequence is that of S-ribosylhomocysteine lyase from Vibrio alginolyticus.